The sequence spans 336 residues: Cytoskeleton protein RodZ (336 aa).

Residues 1-111 (MNTEATHDKT…LGKRRKKRDG (111 aa)) lie on the Cytoplasmic side of the membrane. Residues 19-71 (LRNAREQLGLSQQAVAERLCLKVSTVRDIEEDKAPADLASTFLRGYIRSYAKL) enclose the HTH cro/C1-type domain. The H-T-H motif DNA-binding region spans 30 to 49 (QQAVAERLCLKVSTVRDIEE). The helical; Signal-anchor for type II membrane protein transmembrane segment at 112 to 132 (WLMSFTWLVLFVVIGLTGAWW) threads the bilayer. Residues 133–336 (WQNHKAQQEE…TVSAEQSAAQ (204 aa)) are Periplasmic-facing. The segment covering 152–164 (AALNNSGNNGAQS) has biased composition (low complexity). The tract at residues 152–235 (AALNNSGNNG…TTTGNVNVTQ (84 aa)) is disordered. Composition is skewed to polar residues over residues 165–190 (VPLN…TVEP) and 200–217 (PDQT…QANV). The segment covering 220–235 (APAVTPTTTGNVNVTQ) has biased composition (low complexity).

This sequence belongs to the RodZ family.

The protein resides in the cell inner membrane. Functionally, cytoskeletal protein that is involved in cell-shape control through regulation of the length of the long axis. The chain is Cytoskeleton protein RodZ from Enterobacter sp. (strain 638).